Reading from the N-terminus, the 70-residue chain is UPF0352 protein PSHAa1818 (70 aa).

It belongs to the UPF0352 family.

This is UPF0352 protein PSHAa1818 from Pseudoalteromonas translucida (strain TAC 125).